A 42-amino-acid chain; its full sequence is Photosystem II reaction center protein J (42 aa).

Residues 10–30 traverse the membrane as a helical segment; sequence IPLWLVGTVAGTAALTLVAVF.

It belongs to the PsbJ family. As to quaternary structure, PSII is composed of 1 copy each of membrane proteins PsbA, PsbB, PsbC, PsbD, PsbE, PsbF, PsbH, PsbI, PsbJ, PsbK, PsbL, PsbM, PsbT, PsbX, PsbY, PsbZ, Psb30/Ycf12, at least 3 peripheral proteins of the oxygen-evolving complex and a large number of cofactors. It forms dimeric complexes.

It is found in the plastid. It localises to the chloroplast thylakoid membrane. One of the components of the core complex of photosystem II (PSII). PSII is a light-driven water:plastoquinone oxidoreductase that uses light energy to abstract electrons from H(2)O, generating O(2) and a proton gradient subsequently used for ATP formation. It consists of a core antenna complex that captures photons, and an electron transfer chain that converts photonic excitation into a charge separation. In Chlorella vulgaris (Green alga), this protein is Photosystem II reaction center protein J.